The sequence spans 140 residues: Putative pre-16S rRNA nuclease (140 aa).

This sequence belongs to the YqgF nuclease family.

The protein localises to the cytoplasm. In terms of biological role, could be a nuclease involved in processing of the 5'-end of pre-16S rRNA. The protein is Putative pre-16S rRNA nuclease of Aeromonas hydrophila subsp. hydrophila (strain ATCC 7966 / DSM 30187 / BCRC 13018 / CCUG 14551 / JCM 1027 / KCTC 2358 / NCIMB 9240 / NCTC 8049).